We begin with the raw amino-acid sequence, 100 residues long: Ubiquitin-related modifier 1 homolog (100 aa).

At Gly100 the chain carries 1-thioglycine. Gly100 participates in a covalent cross-link: Glycyl lysine isopeptide (Gly-Lys) (interchain with K-? in acceptor proteins).

This sequence belongs to the URM1 family. In terms of assembly, interacts with cer. Post-translationally, C-terminal thiocarboxylation occurs in 2 steps, it is first acyl-adenylated (-COAMP) via the hesA/moeB/thiF part of the MOCS3 homolog, then thiocarboxylated (-COSH) via the rhodanese domain of the MOCS3 homolog.

The protein resides in the cytoplasm. It participates in tRNA modification; 5-methoxycarbonylmethyl-2-thiouridine-tRNA biosynthesis. In terms of biological role, acts as a sulfur carrier required for 2-thiolation of mcm(5)S(2)U at tRNA wobble positions of cytosolic tRNA(Lys), tRNA(Glu) and tRNA(Gln). Serves as sulfur donor in tRNA 2-thiolation reaction by being thiocarboxylated (-COSH) at its C-terminus by MOCS3. The sulfur is then transferred to tRNA to form 2-thiolation of mcm(5)S(2)U. Also acts as a ubiquitin-like protein (UBL) that is covalently conjugated via an isopeptide bond to lysine residues of target proteins such as Prx2/Jafrac1, Ciao1, Eip71CD and GILT1. The thiocarboxylated form serves as substrate for conjugation and oxidative stress specifically induces the formation of UBL-protein conjugates. The protein is Ubiquitin-related modifier 1 homolog of Drosophila willistoni (Fruit fly).